Here is a 126-residue protein sequence, read N- to C-terminus: Aspartate 1-decarboxylase (126 aa).

The active-site Schiff-base intermediate with substrate; via pyruvic acid is the S25. S25 bears the Pyruvic acid (Ser) mark. T57 is a binding site for substrate. Y58 (proton donor) is an active-site residue. 73–75 (GAA) serves as a coordination point for substrate.

This sequence belongs to the PanD family. As to quaternary structure, heterooctamer of four alpha and four beta subunits. Pyruvate is required as a cofactor. Is synthesized initially as an inactive proenzyme, which is activated by self-cleavage at a specific serine bond to produce a beta-subunit with a hydroxyl group at its C-terminus and an alpha-subunit with a pyruvoyl group at its N-terminus.

It localises to the cytoplasm. It catalyses the reaction L-aspartate + H(+) = beta-alanine + CO2. It participates in cofactor biosynthesis; (R)-pantothenate biosynthesis; beta-alanine from L-aspartate: step 1/1. In terms of biological role, catalyzes the pyruvoyl-dependent decarboxylation of aspartate to produce beta-alanine. This chain is Aspartate 1-decarboxylase, found in Salmonella choleraesuis (strain SC-B67).